We begin with the raw amino-acid sequence, 660 residues long: Probable Xaa-Pro aminopeptidase PTRG_10574 (660 aa).

4 residues coordinate Mn(2+): aspartate 274, aspartate 285, glutamate 435, and glutamate 476. Residues 641-660 (SAGSGSTPLWKPHNKQDKKN) are disordered.

The protein belongs to the peptidase M24B family. It depends on Mn(2+) as a cofactor.

It catalyses the reaction Release of any N-terminal amino acid, including proline, that is linked to proline, even from a dipeptide or tripeptide.. Functionally, catalyzes the removal of a penultimate prolyl residue from the N-termini of peptides. The sequence is that of Probable Xaa-Pro aminopeptidase PTRG_10574 from Pyrenophora tritici-repentis (strain Pt-1C-BFP) (Wheat tan spot fungus).